The primary structure comprises 369 residues: uncharacterized protein (369 aa).

This sequence belongs to the myo-inositol 1-phosphate synthase family.

This is an uncharacterized protein from Mycobacterium leprae (strain TN).